The primary structure comprises 99 residues: Transcriptional regulator WhiB2 (99 aa).

Residues 33 to 90 (LCAQTDPEAFFPEKGGSTRDAKRVCAKCEVREQCLKWAIDHDERFGIWGGMSERERRR) form the 4Fe-4S Wbl-type domain. Positions 34, 57, 60, and 66 each coordinate [4Fe-4S] cluster.

This sequence belongs to the WhiB family. [4Fe-4S] cluster is required as a cofactor. Post-translationally, the Fe-S cluster can be nitrosylated by nitric oxide (NO). In terms of processing, upon Fe-S cluster removal intramolecular disulfide bonds are formed.

The protein resides in the cytoplasm. Its function is as follows. Acts as a transcriptional regulator. Probably redox-responsive. The apo- but not holo-form probably binds DNA. The sequence is that of Transcriptional regulator WhiB2 (whiB2) from Bifidobacterium longum (strain NCC 2705).